The primary structure comprises 584 residues: Interferon regulatory factor 2-binding protein 1 (584 aa).

The interval 60 to 127 (VLPEGRSPGP…SGRLPLPSPA (68 aa)) is disordered. Residues serine 66 and serine 125 each carry the phosphoserine modification. Arginine 177 is subject to Omega-N-methylarginine. Position 186 is a phosphoserine (serine 186). Residues 197–217 (EKEKQQRNADCLAELNEAMRG) are a coiled coil. Lysine 227 participates in a covalent cross-link: Glycyl lysine isopeptide (Lys-Gly) (interchain with G-Cter in SUMO2). The interval 346–420 (PAEALPQQYP…PYSAETPGVP (75 aa)) is disordered. Over residues 354 to 369 (YPEPAPAALCGPPPRA) the composition is skewed to pro residues. 4 positions are modified to phosphoserine: serine 371, serine 384, serine 421, and serine 436. Residues 433-495 (LGHSPKDPGG…VSGGGSGTGA (63 aa)) are disordered. Lysine 438 participates in a covalent cross-link: Glycyl lysine isopeptide (Lys-Gly) (interchain with G-Cter in SUMO2). Low complexity predominate over residues 449-463 (AGGASPAASSTAQPP). A phosphoserine mark is found at serine 453 and serine 457. The RING-type; degenerate zinc-finger motif lies at 503-550 (CTLCRERLEDTHFVQCPSVPGHKFCFPCSREFIKAQGPAGEVYCPSGD). The tract at residues 503–550 (CTLCRERLEDTHFVQCPSVPGHKFCFPCSREFIKAQGPAGEVYCPSGD) is cys-rich.

Belongs to the IRF2BP family. As to quaternary structure, interacts with IRF2. Part of a corepressor complex containing IRF2 and IRF2BP2. Interacts with JDP2.

The protein resides in the nucleus. The enzyme catalyses S-ubiquitinyl-[E2 ubiquitin-conjugating enzyme]-L-cysteine + [acceptor protein]-L-lysine = [E2 ubiquitin-conjugating enzyme]-L-cysteine + N(6)-ubiquitinyl-[acceptor protein]-L-lysine.. Acts as a transcriptional corepressor in a IRF2-dependent manner; this repression is not mediated by histone deacetylase activities. May act as an E3 ligase towards JDP2, enhancing its polyubiquitination. Represses ATF2-dependent transcriptional activation. The sequence is that of Interferon regulatory factor 2-binding protein 1 (IRF2BP1) from Homo sapiens (Human).